The following is a 417-amino-acid chain: DNA-directed RNA polymerase subunit beta (417 aa).

This sequence belongs to the RNA polymerase beta chain family. As to quaternary structure, in plastids the minimal PEP RNA polymerase catalytic core is composed of four subunits: alpha, beta, beta', and beta''. When a (nuclear-encoded) sigma factor is associated with the core the holoenzyme is formed, which can initiate transcription.

The protein resides in the plastid. The protein localises to the chloroplast. The enzyme catalyses RNA(n) + a ribonucleoside 5'-triphosphate = RNA(n+1) + diphosphate. Its function is as follows. DNA-dependent RNA polymerase catalyzes the transcription of DNA into RNA using the four ribonucleoside triphosphates as substrates. The sequence is that of DNA-directed RNA polymerase subunit beta (rpoB) from Saponaria officinalis (Common soapwort).